A 323-amino-acid chain; its full sequence is MQREPPKRKQEKKVEKGLFDATSFGKDLLAGGVAAAVSKTTVAPIERVKLLLQVQASSKQISPEAQYKGIVDCLVRIPREQGFLSYWRGNLANVIRYFPTQALNFAFKDKYKQLFMSGVNKEKQFWRWFLANLASGGAAGATSLCVVYPLDFARTRLGADIGKGPEERQFKGLGDCIMKIAKSDGIVGLYQGFGVSVQGIIVYRASYFGAYDTVKGLLPKPKETHFLVSFFIAQVVTTCSGILSYPFDTVRRRMMMQSGEAERQYKGTLDCFMKIYQQEGIGAFFRGAFSNILRGTGGALVLVLYDKIKDLLNIDIGGSSSGD.

The Mitochondrial intermembrane portion of the chain corresponds to 1-23; that stretch reads MQREPPKRKQEKKVEKGLFDATS. One copy of the Solcar 1 repeat lies at 22 to 114; that stretch reads TSFGKDLLAG…FAFKDKYKQL (93 aa). Residues 24-53 form a helical membrane-spanning segment; the sequence is FGKDLLAGGVAAAVSKTTVAPIERVKLLLQ. Over 54 to 90 the chain is Mitochondrial matrix; it reads VQASSKQISPEAQYKGIVDCLVRIPREQGFLSYWRGN. Residues 91-115 form a helical membrane-spanning segment; sequence LANVIRYFPTQALNFAFKDKYKQLF. 2 residues coordinate ADP: Arg-96 and Lys-108. The Mitochondrial intermembrane portion of the chain corresponds to 116–125; it reads MSGVNKEKQF. Residues 126-146 traverse the membrane as a helical segment; it reads WRWFLANLASGGAAGATSLCV. 2 Solcar repeats span residues 127-217 and 224-311; these read RWFL…VKGL and THFL…IKDL. Over 147–194 the chain is Mitochondrial matrix; sequence VYPLDFARTRLGADIGKGPEERQFKGLGDCIMKIAKSDGIVGLYQGFG. A helical membrane pass occupies residues 195 to 215; sequence VSVQGIIVYRASYFGAYDTVK. Over 216 to 226 the chain is Mitochondrial intermembrane; it reads GLLPKPKETHF. A helical transmembrane segment spans residues 227-247; the sequence is LVSFFIAQVVTTCSGILSYPF. Topologically, residues 248 to 287 are mitochondrial matrix; it reads DTVRRRMMMQSGEAERQYKGTLDCFMKIYQQEGIGAFFRG. Position 251 (Arg-251) interacts with ADP. An important for transport activity region spans residues 251–256; it reads RRRMMM. The Nucleotide carrier signature motif signature appears at 251–256; that stretch reads RRRMMM. A helical transmembrane segment spans residues 288–305; sequence AFSNILRGTGGALVLVLY. At 306 to 323 the chain is on the mitochondrial intermembrane side; it reads DKIKDLLNIDIGGSSSGD.

It belongs to the mitochondrial carrier (TC 2.A.29) family. In terms of assembly, monomer.

The protein localises to the mitochondrion inner membrane. It is found in the membrane. It localises to the cell projection. Its subcellular location is the cilium. The protein resides in the flagellum membrane. The enzyme catalyses ADP(in) + ATP(out) = ADP(out) + ATP(in). It carries out the reaction dATP(out) + ADP(in) = dATP(in) + ADP(out). It catalyses the reaction dADP(in) + ADP(out) = dADP(out) + ADP(in). The catalysed reaction is H(+)(in) = H(+)(out). The matrix-open state (m-state) is inhibited by the membrane-permeable bongkrekic acid (BKA). The cytoplasmic-open state (c-state) is inhibited by the membrane-impermeable toxic inhibitor carboxyatractyloside (CATR). Proton transporter activity is inhibited by ADP:ATP antiporter activity. Its function is as follows. ADP:ATP antiporter that mediates import of ADP into the mitochondrial matrix for ATP synthesis, and export of ATP out to fuel the cell. Cycles between the cytoplasmic-open state (c-state) and the matrix-open state (m-state): operates by the alternating access mechanism with a single substrate-binding site intermittently exposed to either the cytosolic (c-state) or matrix (m-state) side of the inner mitochondrial membrane. Specifically required during spermatogenesis, probably to mediate ADP:ATP exchange in spermatocytes. Large ATP supplies from mitochondria may be critical for normal progression of spermatogenesis during early stages of meiotic prophase I, including DNA double-strand break repair and chromosomal synapsis. In addition to its ADP:ATP antiporter activity, also involved in mitochondrial uncoupling and mitochondrial permeability transition pore (mPTP) activity. Plays a role in mitochondrial uncoupling by acting as a proton transporter: proton transport uncouples the proton flows via the electron transport chain and ATP synthase to reduce the efficiency of ATP production and cause mitochondrial thermogenesis. Proton transporter activity is inhibited by ADP:ATP antiporter activity, suggesting that SLC25A31/ANT4 acts as a master regulator of mitochondrial energy output by maintaining a delicate balance between ATP production (ADP:ATP antiporter activity) and thermogenesis (proton transporter activity). Proton transporter activity requires free fatty acids as cofactor, but does not transport it. Among nucleotides, may also exchange ADP for dATP and dADP. Also plays a key role in mPTP opening, a non-specific pore that enables free passage of the mitochondrial membranes to solutes of up to 1.5 kDa, and which contributes to cell death. It is however unclear if SLC25A31/ANT4 constitutes a pore-forming component of mPTP or regulates it. This chain is ADP/ATP translocase 4, found in Bos taurus (Bovine).